The following is a 1439-amino-acid chain: MNELMKILGQTGQSVTFDQIKIQLASSEQVRSWSYGEIKKPETINYRTFKPERDGLFCARIFGPIKDYECLCGKYKRMKFRGIVCEKCGVEVTLAKVRRERMGHIELASPVAHIWFLKSLPSRIATMLDLPLKDVEPVLYFEKFLVLDKGVCESDQIDSYKNGKKRDQYLLDEIRCEDLLDEYPDAGIDVGIGAEAIKRALSSYDWGIPNDQERELSLAAKEKGLPDPFDYDADVMEGDSEKTMMRKKLRKATSEAARKKLVKRLKLVEAFVESGSRPDWMIMDIVPVIPPELRPLVPLDGGRFATSDLNDLYRRVINRNNRLKRLIELRAPDIIVRNEKRMLQEAVDALFDNGRRGRAITGANKRPLKSLSDMLKGKQGRFRQNLLGKRVDYSGRSVIVVGPELKLHQCGLPKKMALELFKPFIYSKLEKYGHATTIKAAKRMVEKERPEVWDILEEVIREHPVMLNRAPTLHRLGIQAFEPTLIEGKAIQLHPLVCTAFNADFDGDQMAVHVPLSLEAQLEARVLMMSTNNILSPANGKPIIVPSQDIVLGLYYLSLEVPEYRETPDEAVIKDGKIVTAAPPAYSDVAEIESAMLSGSLKLHDKIRLRLPTIDAEGKSVRQTILTTPGRALIAQILPKHQAIPFSLVNKQLTKKNVSDVIDTVYRHCGQKEAVIFCDRLMGLGFRHAARAGISFGKDDMIIPEAKATLVGKTSEEVKEFEQQYQDGLITAGERYNKVVDAWSRCTDEVQAAMLKEISKQVIGKPTNSVWMMSHSGARGSPAQMKQLAGMRGLMVKPSGEIIEQPIIANFKEGLSVLDYFTSSHGARKGLADTALKTANSGYLTRRLVDVAQDCIIVEPDCGTERGLTVRAVMDSGEVVASLSERILGRTLSKDVIHPVTQDVILPRNTLIEEAEAELIEKAGVESVDIRSVLTCDSRVGICAHCYGRDLARGTPVNIGEAVGVIAAQSIGEPGTQLTMRTFHIGGAATRGAEQSMVEASRDGIVTIKNRNVVENSQKVLVVMSRNCEILLTDENGVERARYRVPYGARLMVSEGEAVTRTQKMAEWDPYTLPIITEQAGTVEYLDLIDSITLVERMDEVTGLSSKVVVDYKQAAKGVDLRPRLQLKDASGNVVKLANGNDARYFLSPDSILSVENGAEVNAGDVLARIPREGSKTRDITGGLPRVAELFEARRPKDHAIIAEGEGRIEFGKDYKSKRCVIVKNDDTGEETQYLIPKGKHVSVQEGDFVQKGDPLVDGPRVPHDILKVMGVEALSDYLVNEIQDVYRLQGVKINDKHIEVIVRQMLQKVEILEPGDSTYLIGETVDRIEYEGENQRLMENGDTPAKAMPVLQGITKASLQTQSFISAASFQETTRVLTDAATSGKVDTLNGLKENVIVGRLIPAGTGSVMNRLRSIAASQDRQRVGGASPKAVEDAAE.

Residues Cys-70, Cys-72, Cys-85, and Cys-88 each contribute to the Zn(2+) site. 3 residues coordinate Mg(2+): Asp-504, Asp-506, and Asp-508. Zn(2+) contacts are provided by Cys-862, Cys-936, Cys-943, and Cys-946.

The protein belongs to the RNA polymerase beta' chain family. In terms of assembly, the RNAP catalytic core consists of 2 alpha, 1 beta, 1 beta' and 1 omega subunit. When a sigma factor is associated with the core the holoenzyme is formed, which can initiate transcription. Mg(2+) serves as cofactor. Requires Zn(2+) as cofactor.

The catalysed reaction is RNA(n) + a ribonucleoside 5'-triphosphate = RNA(n+1) + diphosphate. DNA-dependent RNA polymerase catalyzes the transcription of DNA into RNA using the four ribonucleoside triphosphates as substrates. This Gluconobacter oxydans (strain 621H) (Gluconobacter suboxydans) protein is DNA-directed RNA polymerase subunit beta'.